Consider the following 73-residue polypeptide: Kappa-scoloptoxin(03)-Ssm1b (73 aa).

The first 23 residues, 1–23 (MKPSMAILLVIALIIFSLDKSYS), serve as a signal peptide directing secretion. 3 cysteine pairs are disulfide-bonded: Cys32–Cys58, Cys41–Cys57, and Cys44–Cys67.

Post-translationally, contains 3 disulfide bonds. As to expression, expressed by the venom gland.

It localises to the secreted. Its function is as follows. Inhibits voltage-gated potassium channels. This is Kappa-scoloptoxin(03)-Ssm1b from Scolopendra mutilans (Chinese red-headed centipede).